A 491-amino-acid polypeptide reads, in one-letter code: Glutamate--tRNA ligase (491 aa).

The 'HIGH' region signature appears at 13-23 (PSPTGFLHIGN). Zn(2+) is bound by residues cysteine 110, cysteine 112, cysteine 137, and histidine 139. A 'KMSKS' region motif is present at residues 254–258 (KLSKR). Lysine 257 contributes to the ATP binding site.

It belongs to the class-I aminoacyl-tRNA synthetase family. Glutamate--tRNA ligase type 1 subfamily. As to quaternary structure, monomer. Zn(2+) serves as cofactor.

The protein localises to the cytoplasm. It carries out the reaction tRNA(Glu) + L-glutamate + ATP = L-glutamyl-tRNA(Glu) + AMP + diphosphate. In terms of biological role, catalyzes the attachment of glutamate to tRNA(Glu) in a two-step reaction: glutamate is first activated by ATP to form Glu-AMP and then transferred to the acceptor end of tRNA(Glu). The polypeptide is Glutamate--tRNA ligase (Listeria monocytogenes serovar 1/2a (strain ATCC BAA-679 / EGD-e)).